The chain runs to 180 residues: Vacuolar ATPase assembly protein VMA22 (180 aa).

A coiled-coil region spans residues 16–37; it reads QLLGDLEELEGKRTVLNARVEE. A compositionally biased stretch (basic and acidic residues) spans 92–101; sequence EEVGPREAGL. The tract at residues 92–122 is disordered; that stretch reads EEVGPREAGLRRRKGPTKTPEPESSEAPQDP. A coiled-coil region spans residues 153–176; that stretch reads SLQNRIDWGRSQLRGLQEKLKQLE.

As to quaternary structure, accessory component of the multisubunit proton-transporting vacuolar (V)-ATPase protein pump. As to expression, expressed throughout the brain.

It localises to the endosome. Its subcellular location is the lysosome. It is found in the endoplasmic reticulum-Golgi intermediate compartment. The protein localises to the cytoplasmic vesicle. The protein resides in the COPI-coated vesicle. It localises to the endoplasmic reticulum. Accessory component of the proton-transporting vacuolar (V)-ATPase protein pump involved in intracellular iron homeostasis. In aerobic conditions, required for intracellular iron homeostasis, thus triggering the activity of Fe(2+) prolyl hydroxylase (PHD) enzymes, and leading to HIF1A hydroxylation and subsequent proteasomal degradation. Necessary for endolysosomal acidification and lysosomal degradation. May be involved in Golgi homeostasis. The polypeptide is Vacuolar ATPase assembly protein VMA22 (Homo sapiens (Human)).